A 607-amino-acid chain; its full sequence is MIQNVGNHLRRGLASVFSNRTSRKSALRAGNDSAMADGEGYRNPTEVQMSQLVLPCHTNQRGELSVGQLLKWIDTTACLSAERHAGCPCVTASMDDIYFEHTISVGQVVNIKAKVNRAFNSSMEVGIQVASEDLCSEKQWNVCKALATFVARREITKVKLKQITPRTEEEKMEHSVAAERRRMRLVYADTIKDLLANCAIQGDLESRDCSRMVPAEKTRVESVELVLPPHANHQGNTFGGQIMAWMENVATIAASRLCRAHPTLKAIEMFHFRGPSQVGDRLVLKAIVNNAFKHSMEVGVCVEAYRQEAETHRRHINSAFMTFVVLDADDQPQLLPWIRPQPGDGERRYREASARKKIRLDRKYIVSCKQTEVPLSVPWDPSNQVYLSYNNVSSLKMLVAKDNWVLSSEISQVRLYTLEDDKFLSFHMEMVVHVDAAQAFLLLSDLRQRPEWDKHYRSVELVQQVDEDDAIYHVTSPALGGHTKPQDFVILASRRKPCDNGDPYVIALRSVTLPTHRETPEYRRGETLCSGFCLWREGDQLTKCCWVRVSLTELVSASGFYSWGLESRSKGRRSDGWNGKLAGGHLSTLKAIPVAKINSRFGYLQDT.

Residues 1-13 constitute a mitochondrion transit peptide; that stretch reads MIQNVGNHLRRGL. 2 positions are modified to phosphoserine: S15 and S25. The HotDog ACOT-type 1 domain occupies 43 to 155; the sequence is NPTEVQMSQL…LATFVARREI (113 aa). Residues 91–93, 120–122, R181, and 271–273 contribute to the CoA site; these read TAS, NSS, and HFR. The HotDog ACOT-type 2 domain occupies 216 to 329; the sequence is EKTRVESVEL…FMTFVVLDAD (114 aa). The 211-residue stretch at 375-585 folds into the START domain; it reads LSVPWDPSNQ…GWNGKLAGGH (211 aa).

Isoform 1 is predominantly expressed in skeletal muscle, liver, testis, stomach, spleen, lung and brain. Isoform 2 is predominantly expressed in kidney, uterus, hibernoma and white adipose tissue.

It is found in the mitochondrion matrix. The protein resides in the cytoplasm. The enzyme catalyses hexadecanoyl-CoA + H2O = hexadecanoate + CoA + H(+). The catalysed reaction is tetradecanoyl-CoA + H2O = tetradecanoate + CoA + H(+). It catalyses the reaction dodecanoyl-CoA + H2O = dodecanoate + CoA + H(+). It carries out the reaction butanoyl-CoA + H2O = butanoate + CoA + H(+). The protein operates within lipid metabolism; fatty acid metabolism. Its function is as follows. Has an acyl-CoA thioesterase activity with a preference for the long chain fatty acyl-CoA thioesters hexadecanoyl-CoA/palmitoyl-CoA and tetradecanoyl-CoA/myristoyl-CoA which are the main substrates in the mitochondrial beta-oxidation pathway. This chain is Acyl-coenzyme A thioesterase 11 (ACOT11), found in Homo sapiens (Human).